The chain runs to 482 residues: Ribosomal RNA small subunit methyltransferase F (482 aa).

S-adenosyl-L-methionine-binding positions include 119–125 (ASAPGSK), glutamate 143, aspartate 170, and aspartate 188. Cysteine 241 functions as the Nucleophile in the catalytic mechanism.

Belongs to the class I-like SAM-binding methyltransferase superfamily. RsmB/NOP family.

It is found in the cytoplasm. The catalysed reaction is cytidine(1407) in 16S rRNA + S-adenosyl-L-methionine = 5-methylcytidine(1407) in 16S rRNA + S-adenosyl-L-homocysteine + H(+). In terms of biological role, specifically methylates the cytosine at position 1407 (m5C1407) of 16S rRNA. The protein is Ribosomal RNA small subunit methyltransferase F of Shewanella sp. (strain MR-7).